The sequence spans 226 residues: Lipoprotein-releasing system ATP-binding protein LolD (226 aa).

Positions 6–226 (LSVEQVSKSF…QLQQGSLIRI (221 aa)) constitute an ABC transporter domain. An ATP-binding site is contributed by 42–49 (GESGCGKS).

Belongs to the ABC transporter superfamily. Lipoprotein translocase (TC 3.A.1.125) family. The complex is composed of two ATP-binding proteins (LolD) and two transmembrane proteins (LolC and LolE).

The protein resides in the cell inner membrane. Functionally, part of the ABC transporter complex LolCDE involved in the translocation of mature outer membrane-directed lipoproteins, from the inner membrane to the periplasmic chaperone, LolA. Responsible for the formation of the LolA-lipoprotein complex in an ATP-dependent manner. This Treponema pallidum (strain Nichols) protein is Lipoprotein-releasing system ATP-binding protein LolD.